Here is a 440-residue protein sequence, read N- to C-terminus: Adenylosuccinate synthetase (440 aa).

Residues 11 to 17 and 39 to 41 each bind GTP; these read GDEGKGG and GHT. The active-site Proton acceptor is the aspartate 12. Positions 12 and 39 each coordinate Mg(2+). Residues 12 to 15, 37 to 40, threonine 127, arginine 141, glutamine 230, threonine 245, and arginine 311 contribute to the IMP site; these read DEGK and NAGH. Catalysis depends on histidine 40, which acts as the Proton donor. Residue 307 to 313 participates in substrate binding; sequence TVTGRPR. GTP is bound by residues arginine 313, 339 to 341, and 424 to 426; these read HLD and GVG.

It belongs to the adenylosuccinate synthetase family. In terms of assembly, homodimer. Mg(2+) serves as cofactor.

The protein resides in the cytoplasm. It carries out the reaction IMP + L-aspartate + GTP = N(6)-(1,2-dicarboxyethyl)-AMP + GDP + phosphate + 2 H(+). It functions in the pathway purine metabolism; AMP biosynthesis via de novo pathway; AMP from IMP: step 1/2. Its function is as follows. Plays an important role in the de novo pathway of purine nucleotide biosynthesis. Catalyzes the first committed step in the biosynthesis of AMP from IMP. In Halobacterium salinarum (strain ATCC 29341 / DSM 671 / R1), this protein is Adenylosuccinate synthetase.